Consider the following 394-residue polypeptide: uncharacterized protein (394 aa).

11 consecutive transmembrane segments (helical) span residues 10–30, 50–70, 79–99, 100–120, 138–158, 166–186, 218–238, 243–263, 291–311, 337–357, and 364–384; these read PALI…NYYA, FIVT…VPLG, IVSM…SQSL, AMMI…QILV, TIMS…GLLA, VFWV…RGLP, LLGC…AFLL, FNYS…GALG, WLAI…ILVL, LTAG…LISA, and GWAG…LVWW.

It belongs to the major facilitator superfamily.

It localises to the cell inner membrane. This is an uncharacterized protein from Escherichia coli O157:H7.